The following is a 408-amino-acid chain: Putative ankyrin repeat protein L483 (408 aa).

ANK repeat units lie at residues 78 to 107 (SLNK…DIKA), 108 to 137 (GDDC…NIRA), 139 to 167 (NDYA…DIRA), 168 to 197 (NNDY…NIRT), 198 to 227 (ENDY…DIRA), 229 to 257 (NDYA…NIRV), 259 to 287 (NDYA…NIRA), 288 to 317 (RCDF…DIRS), 318 to 347 (QNDY…DIRT), 349 to 377 (DDYA…NIRA), and 378 to 407 (KDDY…VLTK).

This is Putative ankyrin repeat protein L483 from Acanthamoeba polyphaga (Amoeba).